The sequence spans 210 residues: Pyridoxine/pyridoxamine 5'-phosphate oxidase (210 aa).

Residues 7–10 and Lys65 contribute to the substrate site; that span reads RDEY. FMN contacts are provided by residues 60 to 65, 75 to 76, Arg81, Lys82, and Gln104; these read RMVLLK and FT. 3 residues coordinate substrate: Tyr122, Arg126, and Ser130. FMN is bound by residues 139 to 140 and Trp183; that span reads QS. A substrate-binding site is contributed by 189 to 191; that stretch reads RLH. Arg193 is an FMN binding site.

The protein belongs to the pyridoxamine 5'-phosphate oxidase family. In terms of assembly, homodimer. Requires FMN as cofactor.

The enzyme catalyses pyridoxamine 5'-phosphate + O2 + H2O = pyridoxal 5'-phosphate + H2O2 + NH4(+). It catalyses the reaction pyridoxine 5'-phosphate + O2 = pyridoxal 5'-phosphate + H2O2. The protein operates within cofactor metabolism; pyridoxal 5'-phosphate salvage; pyridoxal 5'-phosphate from pyridoxamine 5'-phosphate: step 1/1. Its pathway is cofactor metabolism; pyridoxal 5'-phosphate salvage; pyridoxal 5'-phosphate from pyridoxine 5'-phosphate: step 1/1. Catalyzes the oxidation of either pyridoxine 5'-phosphate (PNP) or pyridoxamine 5'-phosphate (PMP) into pyridoxal 5'-phosphate (PLP). The chain is Pyridoxine/pyridoxamine 5'-phosphate oxidase from Haemophilus influenzae (strain 86-028NP).